Here is a 232-residue protein sequence, read N- to C-terminus: Phosphatidylserine decarboxylase proenzyme (232 aa).

The active-site Schiff-base intermediate with substrate; via pyruvic acid is S190. The residue at position 190 (S190) is a Pyruvic acid (Ser); by autocatalysis.

It belongs to the phosphatidylserine decarboxylase family. PSD-A subfamily. As to quaternary structure, heterodimer of a large membrane-associated beta subunit and a small pyruvoyl-containing alpha subunit. It depends on pyruvate as a cofactor. Is synthesized initially as an inactive proenzyme. Formation of the active enzyme involves a self-maturation process in which the active site pyruvoyl group is generated from an internal serine residue via an autocatalytic post-translational modification. Two non-identical subunits are generated from the proenzyme in this reaction, and the pyruvate is formed at the N-terminus of the alpha chain, which is derived from the carboxyl end of the proenzyme. The post-translation cleavage follows an unusual pathway, termed non-hydrolytic serinolysis, in which the side chain hydroxyl group of the serine supplies its oxygen atom to form the C-terminus of the beta chain, while the remainder of the serine residue undergoes an oxidative deamination to produce ammonia and the pyruvoyl prosthetic group on the alpha chain.

Its subcellular location is the cell membrane. The enzyme catalyses a 1,2-diacyl-sn-glycero-3-phospho-L-serine + H(+) = a 1,2-diacyl-sn-glycero-3-phosphoethanolamine + CO2. The protein operates within phospholipid metabolism; phosphatidylethanolamine biosynthesis; phosphatidylethanolamine from CDP-diacylglycerol: step 2/2. Catalyzes the formation of phosphatidylethanolamine (PtdEtn) from phosphatidylserine (PtdSer). In Rhodopseudomonas palustris (strain HaA2), this protein is Phosphatidylserine decarboxylase proenzyme.